The primary structure comprises 145 residues: HTH-type transcriptional regulator MhqR (145 aa).

Residues 5–137 (SLKLFIVLSR…CTEMLKRVGL (133 aa)) enclose the HTH marR-type domain. The H-T-H motif DNA-binding region spans 51 to 74 (LQQIGDKILLASGSITYVVDKLEQ).

Functionally, negatively regulates mhqA, mhqED, mhqNOP, and azoR2 which may contribute to the degradation of aromatic compounds. The protein is HTH-type transcriptional regulator MhqR (mhqR) of Bacillus subtilis (strain 168).